A 248-amino-acid chain; its full sequence is Type III pantothenate kinase (248 aa).

ATP is bound at residue D6 to K13. Substrate is bound by residues Y92 and G99–R102. D101 serves as the catalytic Proton acceptor. D121 serves as a coordination point for K(+). ATP is bound at residue T124. T180 is a substrate binding site.

This sequence belongs to the type III pantothenate kinase family. Homodimer. NH4(+) serves as cofactor. The cofactor is K(+).

The protein resides in the cytoplasm. The catalysed reaction is (R)-pantothenate + ATP = (R)-4'-phosphopantothenate + ADP + H(+). It functions in the pathway cofactor biosynthesis; coenzyme A biosynthesis; CoA from (R)-pantothenate: step 1/5. Catalyzes the phosphorylation of pantothenate (Pan), the first step in CoA biosynthesis. The chain is Type III pantothenate kinase from Pseudomonas aeruginosa (strain LESB58).